The primary structure comprises 255 residues: Fasciclin-like arabinogalactan protein 14 (255 aa).

The N-terminal stretch at 1–23 (MSSSLTIFFFFFASTFLYTSSNS) is a signal peptide. The 146-residue stretch at 24 to 169 (FNITNILNEH…ISVLHISSAI (146 aa)) folds into the FAS1 domain. 4 N-linked (GlcNAc...) asparagine glycosylation sites follow: N25, N99, N125, and N159. Residues 179-231 (PTASPLSPVSSPPRPAESPNDDGQDFDEPPSSAPGAAADEPSENAGSANGVSR) form a disordered region. A compositionally biased stretch (acidic residues) spans 197 to 206 (PNDDGQDFDE). Residues 222–231 (NAGSANGVSR) are compositionally biased toward polar residues. S225 carries GPI-anchor amidated serine lipidation. A propeptide spans 226 to 255 (ANGVSRNDSQPAFAFTLLMSFIWWFMARLR) (removed in mature form).

Belongs to the fasciclin-like AGP family.

It localises to the cell membrane. May be a cell surface adhesion protein. The sequence is that of Fasciclin-like arabinogalactan protein 14 (FLA14) from Arabidopsis thaliana (Mouse-ear cress).